We begin with the raw amino-acid sequence, 511 residues long: Serine/threonine-protein kinase Nek3 (511 aa).

Residue Met1 is modified to N-acetylmethionine. The segment at 1–282 is interaction with VAV2; that stretch reads MDNYTVLRVI…EQILDEIKIS (282 aa). In terms of domain architecture, Protein kinase spans 4-255; sequence YTVLRVIGQG…ATTLLCRGSL (252 aa). ATP is bound by residues 10 to 18 and Lys33; that span reads IGQGSFGRA. The active-site Proton acceptor is the Asp125. Phosphothreonine; by autocatalysis is present on Thr159. Disordered regions lie at residues 299–370 and 443–511; these read LGEA…GPSS and GPLS…GERA. Positions 309–321 are enriched in basic and acidic residues; that stretch reads EEERGRKCSHTEL. Positions 472 to 485 are enriched in acidic residues; the sequence is LDEEDTDFEEDNEN. Thr477 carries the post-translational modification Phosphothreonine. Residues 498–511 are compositionally biased toward gly residues; sequence YGDGPGGQLLGERA.

The protein belongs to the protein kinase superfamily. NEK Ser/Thr protein kinase family. NIMA subfamily. In terms of assembly, interacts with PXN, PRLR, VAV1 and VAV2 and this interaction is prolactin-dependent. Requires Mg(2+) as cofactor. Phosphorylation at Thr-477 regulates its catalytic activity. Brain.

It localises to the cytoplasm. The protein localises to the cell projection. Its subcellular location is the axon. The catalysed reaction is L-seryl-[protein] + ATP = O-phospho-L-seryl-[protein] + ADP + H(+). It carries out the reaction L-threonyl-[protein] + ATP = O-phospho-L-threonyl-[protein] + ADP + H(+). Its function is as follows. Protein kinase which influences neuronal morphogenesis and polarity through effects on microtubules. Regulates microtubule acetylation in neurons. Contributes to prolactin-mediated phosphorylation of PXN and VAV2. The chain is Serine/threonine-protein kinase Nek3 (Nek3) from Mus musculus (Mouse).